The primary structure comprises 956 residues: Phosphatidylinositol 4-kinase PIK1a (956 aa).

The PIK helical domain occupies 1–120; it reads MPVAPHELRD…QTVRKFINKL (120 aa). Residues 545–573 form a disordered region; sequence SRDWAKSTPGSPVARSSQEDEKFYGNVSS. Residues 658 to 939 form the PI3K/PI4K catalytic domain; it reads EDWNEKKHRI…YLIEKSVGSM (282 aa). Residues 664–670 form a G-loop region; the sequence is KHRIRKS. Residues 805–813 form a catalytic loop region; the sequence is QIKDRHNGN. Residues 824-848 form an activation loop region; it reads HIDFGFLLSNSPGSVGFEAAPFKLT.

Belongs to the PI3/PI4-kinase family. Type III PI4K subfamily.

It localises to the nucleus. The enzyme catalyses a 1,2-diacyl-sn-glycero-3-phospho-(1D-myo-inositol) + ATP = a 1,2-diacyl-sn-glycero-3-phospho-(1D-myo-inositol 4-phosphate) + ADP + H(+). In terms of biological role, acts on phosphatidylinositol (PI) in the first committed step in the production of the second messenger inositol 1,4,5,-trisphosphate. The chain is Phosphatidylinositol 4-kinase PIK1a (PIKA) from Candida albicans (strain SC5314 / ATCC MYA-2876) (Yeast).